Reading from the N-terminus, the 390-residue chain is GTPase Obg (390 aa).

The region spanning 1-159 (MKFVDEAVVK…REIRLELLLL (159 aa)) is the Obg domain. The 174-residue stretch at 160 to 333 (ADVGMLGLPN…LCYKLADFME (174 aa)) folds into the OBG-type G domain. GTP contacts are provided by residues 166-173 (GLPNAGKS), 191-195 (FTTLI), 213-216 (DIPG), 283-286 (NKVD), and 314-316 (SAI). 2 residues coordinate Mg(2+): Ser173 and Thr193. A compositionally biased stretch (acidic residues) spans 367–382 (TEDDDDWDDWDDEEDD). Positions 367–390 (TEDDDDWDDWDDEEDDGHVVYVRD) are disordered.

It belongs to the TRAFAC class OBG-HflX-like GTPase superfamily. OBG GTPase family. As to quaternary structure, monomer. It depends on Mg(2+) as a cofactor.

Its subcellular location is the cytoplasm. Its function is as follows. An essential GTPase which binds GTP, GDP and possibly (p)ppGpp with moderate affinity, with high nucleotide exchange rates and a fairly low GTP hydrolysis rate. Plays a role in control of the cell cycle, stress response, ribosome biogenesis and in those bacteria that undergo differentiation, in morphogenesis control. The chain is GTPase Obg from Vibrio parahaemolyticus serotype O3:K6 (strain RIMD 2210633).